Reading from the N-terminus, the 118-residue chain is Large ribosomal subunit protein uL18 (118 aa).

Positions 1-24 are disordered; the sequence is MISKPDKNKTRQRRHARVRGKISG. The segment covering 10 to 20 has biased composition (basic residues); the sequence is TRQRRHARVRG.

The protein belongs to the universal ribosomal protein uL18 family. As to quaternary structure, part of the 50S ribosomal subunit; part of the 5S rRNA/L5/L18/L25 subcomplex. Contacts the 5S and 23S rRNAs.

This is one of the proteins that bind and probably mediate the attachment of the 5S RNA into the large ribosomal subunit, where it forms part of the central protuberance. This is Large ribosomal subunit protein uL18 from Lactiplantibacillus plantarum (strain ATCC BAA-793 / NCIMB 8826 / WCFS1) (Lactobacillus plantarum).